A 98-amino-acid polypeptide reads, in one-letter code: NADH-ubiquinone oxidoreductase chain 4L (98 aa).

The next 3 membrane-spanning stretches (helical) occupy residues 2 to 22 (SPIY…TLLF), 26 to 46 (LMST…MVTS), and 61 to 81 (ITML…LVMI).

The protein belongs to the complex I subunit 4L family. As to quaternary structure, core subunit of respiratory chain NADH dehydrogenase (Complex I) which is composed of 45 different subunits.

It localises to the mitochondrion inner membrane. The enzyme catalyses a ubiquinone + NADH + 5 H(+)(in) = a ubiquinol + NAD(+) + 4 H(+)(out). Core subunit of the mitochondrial membrane respiratory chain NADH dehydrogenase (Complex I) which catalyzes electron transfer from NADH through the respiratory chain, using ubiquinone as an electron acceptor. Part of the enzyme membrane arm which is embedded in the lipid bilayer and involved in proton translocation. The polypeptide is NADH-ubiquinone oxidoreductase chain 4L (MT-ND4L) (Nephelomys albigularis (Tomes's rice rat)).